A 263-amino-acid chain; its full sequence is MNTPAAARRFDVITLFPEMFAALTASGITRRALERGLYEIAFHSPRDFVSDPHRTVDDRPYGGGPGMVMLAEPLEKAIGRAKTAQEQALGAAGRVIYLSPQGRPLDHAKVVEMTALPALTLLCGRYEGVDQRLIDRCVDEELSLGDFVLSGGELPAMVLLDAIVRQLPGALNDADSAQEDSFVDGLLDCPHYTRPEIYAGERVPQVLLSGNHAAIRRWRLKQALGTTWRRRPDLLQGRTLSKEELSLLGEFRHEQEGVEGDIA.

S-adenosyl-L-methionine contacts are provided by residues Gly124 and 144 to 149 (LGDFVL).

It belongs to the RNA methyltransferase TrmD family. In terms of assembly, homodimer.

The protein localises to the cytoplasm. The catalysed reaction is guanosine(37) in tRNA + S-adenosyl-L-methionine = N(1)-methylguanosine(37) in tRNA + S-adenosyl-L-homocysteine + H(+). Specifically methylates guanosine-37 in various tRNAs. This chain is tRNA (guanine-N(1)-)-methyltransferase, found in Aromatoleum aromaticum (strain DSM 19018 / LMG 30748 / EbN1) (Azoarcus sp. (strain EbN1)).